Consider the following 236-residue polypeptide: Eukaryotic translation initiation factor 3 subunit J (236 aa).

Residues 1–84 (MADDWESAAD…LREEEAEAER (84 aa)) are disordered. Residues 28–46 (GEDEDEDIKDSWEDEEEKK) show a composition bias toward acidic residues. Composition is skewed to basic and acidic residues over residues 47–58 (DEEKPTKTEAPA) and 68–77 (AKLEQQALRE).

This sequence belongs to the eIF-3 subunit J family. Component of the eukaryotic translation initiation factor 3 (eIF-3) complex. The eIF-3 complex interacts with pix.

It is found in the cytoplasm. Functionally, component of the eukaryotic translation initiation factor 3 (eIF-3) complex, which is involved in protein synthesis of a specialized repertoire of mRNAs and, together with other initiation factors, stimulates binding of mRNA and methionyl-tRNAi to the 40S ribosome. The eIF-3 complex specifically targets and initiates translation of a subset of mRNAs involved in cell proliferation. In Drosophila sechellia (Fruit fly), this protein is Eukaryotic translation initiation factor 3 subunit J.